We begin with the raw amino-acid sequence, 305 residues long: Glycine--tRNA ligase alpha subunit (305 aa).

This sequence belongs to the class-II aminoacyl-tRNA synthetase family. In terms of assembly, tetramer of two alpha and two beta subunits.

It localises to the cytoplasm. It catalyses the reaction tRNA(Gly) + glycine + ATP = glycyl-tRNA(Gly) + AMP + diphosphate. The chain is Glycine--tRNA ligase alpha subunit from Streptococcus pneumoniae (strain 70585).